We begin with the raw amino-acid sequence, 86 residues long: Neurotoxin 8-related gene product 1/2/3 (86 aa).

Positions 1–19 (MNYLTMISLALLVMTGVES) are cleaved as a signal peptide. The LCN-type CS-alpha/beta domain occupies 22 to 84 (RDAYIADNKN…VPIKVPGKCN (63 aa)). 4 cysteine pairs are disulfide-bonded: cysteine 32–cysteine 83, cysteine 36–cysteine 56, cysteine 42–cysteine 66, and cysteine 46–cysteine 68. Residue asparagine 84 is modified to Asparagine amide.

Belongs to the long (4 C-C) scorpion toxin superfamily. Sodium channel inhibitor family. Alpha subfamily. Expressed by the venom gland.

It localises to the secreted. Functionally, binds voltage-dependently at site-3 of sodium channels (Nav) and inhibits the inactivation of the activated channels, thereby blocking neuronal transmission. This is Neurotoxin 8-related gene product 1/2/3 (NTVIIIrgp1) from Androctonus mauritanicus mauritanicus (Scorpion).